The primary structure comprises 167 residues: UPF0102 protein RB9115 (167 aa).

Belongs to the UPF0102 family.

The polypeptide is UPF0102 protein RB9115 (Rhodopirellula baltica (strain DSM 10527 / NCIMB 13988 / SH1)).